The chain runs to 89 residues: Small ribosomal subunit protein uS15 (89 aa).

Over residues 1 to 18 (MSLDTAEKQKLIENHQVH) the composition is skewed to basic and acidic residues. Residues 1-23 (MSLDTAEKQKLIENHQVHPTDTG) are disordered.

It belongs to the universal ribosomal protein uS15 family. As to quaternary structure, part of the 30S ribosomal subunit. Forms a bridge to the 50S subunit in the 70S ribosome, contacting the 23S rRNA.

One of the primary rRNA binding proteins, it binds directly to 16S rRNA where it helps nucleate assembly of the platform of the 30S subunit by binding and bridging several RNA helices of the 16S rRNA. Functionally, forms an intersubunit bridge (bridge B4) with the 23S rRNA of the 50S subunit in the ribosome. In Prochlorococcus marinus (strain MIT 9301), this protein is Small ribosomal subunit protein uS15.